The chain runs to 1106 residues: Communication mutant protein F (1106 aa).

Positions 1 to 28 are cleaved as a signal peptide; that stretch reads MKIYKKNHFLKILIIFIYLSCNILKVNA. In terms of domain architecture, G8 spans 254–380; sequence TIWPNGVVPS…YHNTWSKLAS (127 aa). N-linked (GlcNAc...) asparagine glycans are attached at residues N267, N306, N512, N536, N677, N715, and N833.

The protein belongs to the comF family.

The protein localises to the secreted. The chain is Communication mutant protein F (comF-1) from Dictyostelium discoideum (Social amoeba).